We begin with the raw amino-acid sequence, 118 residues long: Large ribosomal subunit protein uL24 (118 aa).

Belongs to the universal ribosomal protein uL24 family. Part of the 50S ribosomal subunit.

Functionally, one of two assembly initiator proteins, it binds directly to the 5'-end of the 23S rRNA, where it nucleates assembly of the 50S subunit. Its function is as follows. One of the proteins that surrounds the polypeptide exit tunnel on the outside of the subunit. The sequence is that of Large ribosomal subunit protein uL24 from Parasynechococcus marenigrum (strain WH8102).